Here is a 351-residue protein sequence, read N- to C-terminus: UDP-3-O-acylglucosamine N-acyltransferase (351 aa).

Catalysis depends on H240, which acts as the Proton acceptor.

Belongs to the transferase hexapeptide repeat family. LpxD subfamily. Homotrimer.

It catalyses the reaction a UDP-3-O-[(3R)-3-hydroxyacyl]-alpha-D-glucosamine + a (3R)-hydroxyacyl-[ACP] = a UDP-2-N,3-O-bis[(3R)-3-hydroxyacyl]-alpha-D-glucosamine + holo-[ACP] + H(+). The protein operates within bacterial outer membrane biogenesis; LPS lipid A biosynthesis. Its function is as follows. Catalyzes the N-acylation of UDP-3-O-acylglucosamine using 3-hydroxyacyl-ACP as the acyl donor. Is involved in the biosynthesis of lipid A, a phosphorylated glycolipid that anchors the lipopolysaccharide to the outer membrane of the cell. The chain is UDP-3-O-acylglucosamine N-acyltransferase from Pseudomonas putida (strain ATCC 700007 / DSM 6899 / JCM 31910 / BCRC 17059 / LMG 24140 / F1).